Reading from the N-terminus, the 253-residue chain is Allene oxide cyclase 2, chloroplastic (253 aa).

The transit peptide at 1–77 directs the protein to the chloroplast; that stretch reads MASSAVSLQS…SQNGNIENPR (77 aa).

Belongs to the allene oxide cyclase family. As to expression, highly expressed in fully developed leaves.

It localises to the plastid. The protein localises to the chloroplast. The catalysed reaction is (9Z,13S,15Z)-12,13-epoxyoctadeca-9,11,15-trienoate = (9S,13S,15Z)-12-oxophyto-10,15-dienoate. Its function is as follows. Involved in the production of 12-oxo-phytodienoic acid (OPDA), a precursor of jasmonic acid. In Arabidopsis thaliana (Mouse-ear cress), this protein is Allene oxide cyclase 2, chloroplastic (AOC2).